A 267-amino-acid chain; its full sequence is Neuferricin (267 aa).

Positions 1–17 are cleaved as a signal peptide; it reads MLKYLVALISMVLAVWT. One can recognise a Cytochrome b5 heme-binding domain in the interval 53-150; it reads LLTKEQLSLY…RDYTPVGKLI (98 aa).

Belongs to the cytochrome b5 family. MAPR subfamily.

The protein resides in the secreted. Its function is as follows. Heme-binding protein which promotes neuronal but not astrocyte differentiation. The polypeptide is Neuferricin (cyb5d2) (Danio rerio (Zebrafish)).